The primary structure comprises 747 residues: Transcription factor phm2 (747 aa).

The zn(2)-C6 fungal-type DNA-binding region spans 21–50 (CNACRKRKRVRCDRLHPCSNCASRGLGSTC). Disordered stretches follow at residues 112 to 150 (GLQN…DHGS) and 414 to 436 (TAEP…PESR).

The protein resides in the nucleus. In terms of biological role, transcription factor that regulates the expression of the gene cluster that mediates the biosynthesis of the trans-fused decalin-containing tetramic acid phomasetin. The polypeptide is Transcription factor phm2 (Pyrenochaetopsis sp).